The following is a 160-amino-acid chain: Ribosomal RNA large subunit methyltransferase H (160 aa).

S-adenosyl-L-methionine is bound by residues glycine 108 and 127-132 (FGKMTW).

This sequence belongs to the RNA methyltransferase RlmH family. As to quaternary structure, homodimer.

The protein resides in the cytoplasm. The enzyme catalyses pseudouridine(1915) in 23S rRNA + S-adenosyl-L-methionine = N(3)-methylpseudouridine(1915) in 23S rRNA + S-adenosyl-L-homocysteine + H(+). In terms of biological role, specifically methylates the pseudouridine at position 1915 (m3Psi1915) in 23S rRNA. This is Ribosomal RNA large subunit methyltransferase H from Beijerinckia indica subsp. indica (strain ATCC 9039 / DSM 1715 / NCIMB 8712).